Reading from the N-terminus, the 100-residue chain is Ferredoxin-2 (100 aa).

The 2Fe-2S ferredoxin-type domain occupies 4 to 97 (YKVTLINEEE…DCTIMTHQES (94 aa)). [2Fe-2S] cluster is bound by residues Cys-42, Cys-47, Cys-50, and Cys-81.

Belongs to the 2Fe2S plant-type ferredoxin family. [2Fe-2S] cluster serves as cofactor.

Ferredoxins are iron-sulfur proteins that transfer electrons in a wide variety of metabolic reactions. This chain is Ferredoxin-2, found in Aphanothece sacrum.